Consider the following 247-residue polypeptide: MADWDDEKFEPGEVPADGVTDKWEGEDEDDDIKESWDDDDEDEKKEDEAKNTEAAAPKKKKTLKQILKEKEEQKLLEEKRKAEEKQKLEEEDKELTPEEQMAEKLRRQKIVEESDLLVAMDTFGVGTQEEASRTGLDSMIPSTKEEFTEYSKLLVEKLTKFETNPEYIPFLEATLREICVSLDPEDIKKLSSTLNMLQSEKLKAQKGKKAKSKATKKATLTGGAKMGRKDEMDYSYGDLGNEYDDFM.

Disordered stretches follow at residues 1 to 64 (MADW…KTLK) and 77 to 101 (EEKR…EEQM). A compositionally biased stretch (acidic residues) spans 24–45 (EGEDEDDDIKESWDDDDEDEKK). Residues 43-108 (EKKEDEAKNT…EQMAEKLRRQ (66 aa)) are a coiled coil.

It belongs to the eIF-3 subunit J family. As to quaternary structure, component of the eukaryotic translation initiation factor 3 (eIF-3) complex.

The protein localises to the cytoplasm. Functionally, component of the eukaryotic translation initiation factor 3 (eIF-3) complex, which is involved in protein synthesis of a specialized repertoire of mRNAs and, together with other initiation factors, stimulates binding of mRNA and methionyl-tRNAi to the 40S ribosome. The eIF-3 complex specifically targets and initiates translation of a subset of mRNAs involved in cell proliferation. The protein is Eukaryotic translation initiation factor 3 subunit J of Nematostella vectensis (Starlet sea anemone).